A 96-amino-acid chain; its full sequence is Putative membrane protein insertion efficiency factor (96 aa).

A disordered region spans residues 68–96 (DPVPEHFPARHPRPQGSPPTDHPPTDQPS). Pro residues predominate over residues 82-96 (QGSPPTDHPPTDQPS).

It belongs to the UPF0161 family.

The protein resides in the cell membrane. In terms of biological role, could be involved in insertion of integral membrane proteins into the membrane. This is Putative membrane protein insertion efficiency factor from Deinococcus radiodurans (strain ATCC 13939 / DSM 20539 / JCM 16871 / CCUG 27074 / LMG 4051 / NBRC 15346 / NCIMB 9279 / VKM B-1422 / R1).